The primary structure comprises 273 residues: Putative pyruvate, phosphate dikinase regulatory protein (273 aa).

Position 149-156 (149-156 (GPSRTSKT)) interacts with ADP.

This sequence belongs to the pyruvate, phosphate/water dikinase regulatory protein family. PDRP subfamily.

It carries out the reaction N(tele)-phospho-L-histidyl/L-threonyl-[pyruvate, phosphate dikinase] + ADP = N(tele)-phospho-L-histidyl/O-phospho-L-threonyl-[pyruvate, phosphate dikinase] + AMP + H(+). The enzyme catalyses N(tele)-phospho-L-histidyl/O-phospho-L-threonyl-[pyruvate, phosphate dikinase] + phosphate + H(+) = N(tele)-phospho-L-histidyl/L-threonyl-[pyruvate, phosphate dikinase] + diphosphate. In terms of biological role, bifunctional serine/threonine kinase and phosphorylase involved in the regulation of the pyruvate, phosphate dikinase (PPDK) by catalyzing its phosphorylation/dephosphorylation. The sequence is that of Putative pyruvate, phosphate dikinase regulatory protein from Rickettsia typhi (strain ATCC VR-144 / Wilmington).